We begin with the raw amino-acid sequence, 496 residues long: Glutamyl-tRNA(Gln) amidotransferase subunit A (496 aa).

Residues lysine 75 and serine 150 each act as charge relay system in the active site. The active-site Acyl-ester intermediate is serine 174.

The protein belongs to the amidase family. GatA subfamily. As to quaternary structure, heterotrimer of A, B and C subunits.

It carries out the reaction L-glutamyl-tRNA(Gln) + L-glutamine + ATP + H2O = L-glutaminyl-tRNA(Gln) + L-glutamate + ADP + phosphate + H(+). Its function is as follows. Allows the formation of correctly charged Gln-tRNA(Gln) through the transamidation of misacylated Glu-tRNA(Gln) in organisms which lack glutaminyl-tRNA synthetase. The reaction takes place in the presence of glutamine and ATP through an activated gamma-phospho-Glu-tRNA(Gln). The polypeptide is Glutamyl-tRNA(Gln) amidotransferase subunit A (Burkholderia lata (strain ATCC 17760 / DSM 23089 / LMG 22485 / NCIMB 9086 / R18194 / 383)).